The following is a 524-amino-acid chain: Leucine-rich repeat-containing protein 1 (524 aa).

LRR repeat units lie at residues N11–Y34, A35–L58, K60–F81, Q83–K105, L107–E126, L127–N149, L150–Q172, L173–L196, H198–N218, L219–L242, S244–K264, L265–C288, N290–K310, L311–C334, S336–Q356, A357–L380, and L382–A405. The stretch at S456 to E512 forms a coiled coil. The segment at E464–E485 is disordered. T480 carries the post-translational modification Phosphothreonine.

In terms of assembly, interacts with DLG1. May form a complex with DLG1 and ERBIN, where interaction between LRRC1 and ERBIN is indirect.

The protein localises to the cytoplasm. It is found in the membrane. The polypeptide is Leucine-rich repeat-containing protein 1 (Lrrc1) (Mus musculus (Mouse)).